A 116-amino-acid chain; its full sequence is NADH-quinone oxidoreductase subunit A (116 aa).

A run of 3 helical transmembrane segments spans residues 3 to 23, 61 to 81, and 88 to 108; these read FTFL…VIAL, FAIL…WAVV, and QGLV…AYAW.

It belongs to the complex I subunit 3 family. As to quaternary structure, NDH-1 is composed of 14 different subunits. Subunits NuoA, H, J, K, L, M, N constitute the membrane sector of the complex.

The protein resides in the cell inner membrane. The enzyme catalyses a quinone + NADH + 5 H(+)(in) = a quinol + NAD(+) + 4 H(+)(out). In terms of biological role, NDH-1 shuttles electrons from NADH, via FMN and iron-sulfur (Fe-S) centers, to quinones in the respiratory chain. The immediate electron acceptor for the enzyme in this species is believed to be a menaquinone. Couples the redox reaction to proton translocation (for every two electrons transferred, four hydrogen ions are translocated across the cytoplasmic membrane), and thus conserves the redox energy in a proton gradient. This Bacteroides thetaiotaomicron (strain ATCC 29148 / DSM 2079 / JCM 5827 / CCUG 10774 / NCTC 10582 / VPI-5482 / E50) protein is NADH-quinone oxidoreductase subunit A.